Consider the following 199-residue polypeptide: dITP/XTP pyrophosphatase (199 aa).

Ser12–Lys17 contributes to the substrate binding site. The Proton acceptor role is filled by Asp73. Residue Asp73 participates in Mg(2+) binding. Residues Ser74, Phe157 to Asp160, Lys180, and His185 to Arg186 each bind substrate.

This sequence belongs to the HAM1 NTPase family. Homodimer. The cofactor is Mg(2+).

The enzyme catalyses XTP + H2O = XMP + diphosphate + H(+). It catalyses the reaction dITP + H2O = dIMP + diphosphate + H(+). It carries out the reaction ITP + H2O = IMP + diphosphate + H(+). Functionally, pyrophosphatase that catalyzes the hydrolysis of nucleoside triphosphates to their monophosphate derivatives, with a high preference for the non-canonical purine nucleotides XTP (xanthosine triphosphate), dITP (deoxyinosine triphosphate) and ITP. Seems to function as a house-cleaning enzyme that removes non-canonical purine nucleotides from the nucleotide pool, thus preventing their incorporation into DNA/RNA and avoiding chromosomal lesions. In Neisseria meningitidis serogroup A / serotype 4A (strain DSM 15465 / Z2491), this protein is dITP/XTP pyrophosphatase.